The chain runs to 184 residues: Probable RNA 2'-phosphotransferase (184 aa).

This sequence belongs to the KptA/TPT1 family.

Removes the 2'-phosphate from RNA via an intermediate in which the phosphate is ADP-ribosylated by NAD followed by a presumed transesterification to release the RNA and generate ADP-ribose 1''-2''-cyclic phosphate (APPR&gt;P). May function as an ADP-ribosylase. The protein is Probable RNA 2'-phosphotransferase of Rhizobium johnstonii (strain DSM 114642 / LMG 32736 / 3841) (Rhizobium leguminosarum bv. viciae).